A 628-amino-acid polypeptide reads, in one-letter code: Putative serine esterase Mb1866c (628 aa).

Residue Ser-156 is the Acyl-ester intermediate of the active site. Catalysis depends on charge relay system residues Asp-322 and His-350.

This sequence belongs to the CocE/NonD hydrolase family.

This Mycobacterium bovis (strain ATCC BAA-935 / AF2122/97) protein is Putative serine esterase Mb1866c.